Reading from the N-terminus, the 322-residue chain is Acetyl-coenzyme A carboxylase carboxyl transferase subunit beta (322 aa).

Positions 24 to 293 (LWIKCPDTGQ…PAVEEIAASD (270 aa)) constitute a CoA carboxyltransferase N-terminal domain.

Belongs to the AccD/PCCB family. As to quaternary structure, acetyl-CoA carboxylase is a heterohexamer composed of biotin carboxyl carrier protein (AccB), biotin carboxylase (AccC) and two subunits each of ACCase subunit alpha (AccA) and ACCase subunit beta (AccD).

It is found in the cytoplasm. The enzyme catalyses N(6)-carboxybiotinyl-L-lysyl-[protein] + acetyl-CoA = N(6)-biotinyl-L-lysyl-[protein] + malonyl-CoA. Its pathway is lipid metabolism; malonyl-CoA biosynthesis; malonyl-CoA from acetyl-CoA: step 1/1. Functionally, component of the acetyl coenzyme A carboxylase (ACC) complex. Biotin carboxylase (BC) catalyzes the carboxylation of biotin on its carrier protein (BCCP) and then the CO(2) group is transferred by the transcarboxylase to acetyl-CoA to form malonyl-CoA. The polypeptide is Acetyl-coenzyme A carboxylase carboxyl transferase subunit beta (Rhodopseudomonas palustris (strain BisB5)).